Here is a 426-residue protein sequence, read N- to C-terminus: Dihydroorotase (426 aa).

Zn(2+)-binding residues include His58 and His60. Substrate contacts are provided by residues 60–62 and Asn92; that span reads HLR. Zn(2+)-binding residues include Asp150, His177, and His230. Residue Asn276 coordinates substrate. Asp303 is a binding site for Zn(2+). The active site involves Asp303. Substrate is bound by residues His307 and 321–322; that span reads FG.

This sequence belongs to the metallo-dependent hydrolases superfamily. DHOase family. Class I DHOase subfamily. Zn(2+) is required as a cofactor.

The enzyme catalyses (S)-dihydroorotate + H2O = N-carbamoyl-L-aspartate + H(+). Its pathway is pyrimidine metabolism; UMP biosynthesis via de novo pathway; (S)-dihydroorotate from bicarbonate: step 3/3. Catalyzes the reversible cyclization of carbamoyl aspartate to dihydroorotate. This is Dihydroorotase from Listeria monocytogenes serovar 1/2a (strain ATCC BAA-679 / EGD-e).